Here is a 347-residue protein sequence, read N- to C-terminus: Peroxidase C2 (347 aa).

The N-terminal stretch at 1 to 24 (MHSSSSLIKLGFLLLLLNVSLSHA) is a signal peptide. Disulfide bonds link C35-C115, C68-C73, C121-C325, and C201-C233. Residue H66 is the Proton acceptor of the active site. Ca(2+)-binding residues include D67, V70, G72, D74, and S76. N81 carries N-linked (GlcNAc...) asparagine glycosylation. Residue P163 coordinates substrate. Residue H194 participates in heme b binding. T195 is a binding site for Ca(2+). Residues N210 and N238 are each glycosylated (N-linked (GlcNAc...) asparagine). Residues D246, T249, and D254 each contribute to the Ca(2+) site.

It belongs to the peroxidase family. Classical plant (class III) peroxidase subfamily. The cofactor is Ca(2+). It depends on heme b as a cofactor.

The protein resides in the secreted. It localises to the vacuole. The enzyme catalyses 2 a phenolic donor + H2O2 = 2 a phenolic radical donor + 2 H2O. Removal of H(2)O(2), oxidation of toxic reductants, biosynthesis and degradation of lignin, suberization, auxin catabolism, response to environmental stresses such as wounding, pathogen attack and oxidative stress. These functions might be dependent on each isozyme/isoform in each plant tissue. The sequence is that of Peroxidase C2 (PRXC2) from Armoracia rusticana (Horseradish).